We begin with the raw amino-acid sequence, 280 residues long: Myelin proteolipid protein B (280 aa).

Over M1–C10 the chain is Cytoplasmic. S-palmitoyl cysteine attachment occurs at residues C7 and C10. Residues M11 to G36 traverse the membrane as a helical segment. The Extracellular portion of the chain corresponds to H37–E59. Residues Y60–A88 traverse the membrane as a helical segment. The Cytoplasmic segment spans residues E89–K152. S-palmitoyl cysteine attachment occurs at residues C140 and C142. The chain crosses the membrane as a helical span at residues F153–F179. Residues N180–H239 lie on the Extracellular side of the membrane. 2 disulfide bridges follow: C185/C229 and C202/C221. A helical transmembrane segment spans residues L240–L269. Residues R270–F280 are Cytoplasmic-facing.

It belongs to the myelin proteolipid protein family.

The protein resides in the cell membrane. This is the major myelin protein from the central nervous system. It plays an important role in the formation or maintenance of the multilamellar structure of myelin. This chain is Myelin proteolipid protein B (plp1-b), found in Xenopus laevis (African clawed frog).